Here is a 319-residue protein sequence, read N- to C-terminus: Ciliary microtubule inner protein 2A (319 aa).

Belongs to the CIMIP2 family. Microtubule inner protein component of sperm flagellar doublet microtubules.

It is found in the cytoplasm. The protein resides in the cytoskeleton. Its subcellular location is the flagellum axoneme. Its function is as follows. Microtubule inner protein (MIP) part of the dynein-decorated doublet microtubules (DMTs) in flagellum axoneme. Binds to the intra-tubulin interfaces. This chain is Ciliary microtubule inner protein 2A (Cimip2a), found in Mus musculus (Mouse).